The sequence spans 485 residues: Glutamyl-tRNA(Gln) amidotransferase subunit A (485 aa).

Catalysis depends on charge relay system residues Lys78 and Ser153. The Acyl-ester intermediate role is filled by Ser177.

The protein belongs to the amidase family. GatA subfamily. Heterotrimer of A, B and C subunits.

The enzyme catalyses L-glutamyl-tRNA(Gln) + L-glutamine + ATP + H2O = L-glutaminyl-tRNA(Gln) + L-glutamate + ADP + phosphate + H(+). Functionally, allows the formation of correctly charged Gln-tRNA(Gln) through the transamidation of misacylated Glu-tRNA(Gln) in organisms which lack glutaminyl-tRNA synthetase. The reaction takes place in the presence of glutamine and ATP through an activated gamma-phospho-Glu-tRNA(Gln). The protein is Glutamyl-tRNA(Gln) amidotransferase subunit A of Bacillus cereus (strain G9842).